The primary structure comprises 232 residues: MEDHYGYMSIKNMPMSERPREKLLSFGSQSLSNAELLAIILSTGTKDRTAIDLARSILNTSTEGLRGLKDCTIEELSQVKGVGLAKASQIIAAVELGKRISLTTKVNNYKIKGPDDVSNLLMEEMRYLNKEIFNILLLTTKHDIIAIENISVGSLNASIVHPREVFNRAIKRSSSAIILAHNHPSGDPNPSGEDINITKRLIEAGNIIGISVLDHIIIGDGVYFSMKEHKLI.

The region spanning Lys110–Ile232 is the MPN domain. Residues His181, His183, and Asp194 each contribute to the Zn(2+) site. Positions His181 to Asp194 match the JAMM motif motif.

Belongs to the UPF0758 family.

The chain is UPF0758 protein Clos_1766 from Alkaliphilus oremlandii (strain OhILAs) (Clostridium oremlandii (strain OhILAs)).